Consider the following 437-residue polypeptide: Lipopolysaccharide biosynthesis protein RfbH (437 aa).

It belongs to the DegT/DnrJ/EryC1 family. It depends on pyridoxal 5'-phosphate as a cofactor.

Its pathway is bacterial outer membrane biogenesis; LPS O-antigen biosynthesis. In Salmonella typhimurium (strain LT2 / SGSC1412 / ATCC 700720), this protein is Lipopolysaccharide biosynthesis protein RfbH (rfbH).